The sequence spans 180 residues: ATP synthase subunit delta (180 aa).

Belongs to the ATPase delta chain family. In terms of assembly, F-type ATPases have 2 components, F(1) - the catalytic core - and F(0) - the membrane proton channel. F(1) has five subunits: alpha(3), beta(3), gamma(1), delta(1), epsilon(1). F(0) has three main subunits: a(1), b(2) and c(10-14). The alpha and beta chains form an alternating ring which encloses part of the gamma chain. F(1) is attached to F(0) by a central stalk formed by the gamma and epsilon chains, while a peripheral stalk is formed by the delta and b chains.

It localises to the cell membrane. In terms of biological role, f(1)F(0) ATP synthase produces ATP from ADP in the presence of a proton or sodium gradient. F-type ATPases consist of two structural domains, F(1) containing the extramembraneous catalytic core and F(0) containing the membrane proton channel, linked together by a central stalk and a peripheral stalk. During catalysis, ATP synthesis in the catalytic domain of F(1) is coupled via a rotary mechanism of the central stalk subunits to proton translocation. Its function is as follows. This protein is part of the stalk that links CF(0) to CF(1). It either transmits conformational changes from CF(0) to CF(1) or is implicated in proton conduction. This Caldicellulosiruptor bescii (strain ATCC BAA-1888 / DSM 6725 / KCTC 15123 / Z-1320) (Anaerocellum thermophilum) protein is ATP synthase subunit delta.